Reading from the N-terminus, the 264-residue chain is Pyridoxine 5'-phosphate synthase (264 aa).

Asn-28 is a binding site for 3-amino-2-oxopropyl phosphate. Residue 30–31 participates in 1-deoxy-D-xylulose 5-phosphate binding; the sequence is DH. 3-amino-2-oxopropyl phosphate is bound at residue Arg-39. Residue His-64 is the Proton acceptor of the active site. Positions 66 and 71 each coordinate 1-deoxy-D-xylulose 5-phosphate. The Proton acceptor role is filled by Glu-91. Thr-121 lines the 1-deoxy-D-xylulose 5-phosphate pocket. His-217 functions as the Proton donor in the catalytic mechanism. Residues Gly-218 and 239-240 contribute to the 3-amino-2-oxopropyl phosphate site; that span reads GH.

This sequence belongs to the PNP synthase family. Homooctamer; tetramer of dimers.

The protein localises to the cytoplasm. The enzyme catalyses 3-amino-2-oxopropyl phosphate + 1-deoxy-D-xylulose 5-phosphate = pyridoxine 5'-phosphate + phosphate + 2 H2O + H(+). It functions in the pathway cofactor biosynthesis; pyridoxine 5'-phosphate biosynthesis; pyridoxine 5'-phosphate from D-erythrose 4-phosphate: step 5/5. Its function is as follows. Catalyzes the complicated ring closure reaction between the two acyclic compounds 1-deoxy-D-xylulose-5-phosphate (DXP) and 3-amino-2-oxopropyl phosphate (1-amino-acetone-3-phosphate or AAP) to form pyridoxine 5'-phosphate (PNP) and inorganic phosphate. The chain is Pyridoxine 5'-phosphate synthase from Psychrobacter arcticus (strain DSM 17307 / VKM B-2377 / 273-4).